Here is a 776-residue protein sequence, read N- to C-terminus: DNA topoisomerase 1 (776 aa).

The Toprim domain maps to 1 to 111 (MKLVIVESPA…VKSDDFFKRV (111 aa)). Mg(2+) contacts are provided by E7 and D80. Residues 132 to 568 (DTNLVNAQQA…FWSGFNHNIE (437 aa)) enclose the Topo IA-type catalytic domain. The segment at 166 to 171 (SAGRVQ) is interaction with DNA. Y304 serves as the catalytic O-(5'-phospho-DNA)-tyrosine intermediate. Residues 600–627 (CPSCNTGELSLKLGKFGAFLACSNYPEC) form a C4-type zinc finger.

It belongs to the type IA topoisomerase family. Monomer. Mg(2+) is required as a cofactor.

It catalyses the reaction ATP-independent breakage of single-stranded DNA, followed by passage and rejoining.. In terms of biological role, releases the supercoiling and torsional tension of DNA, which is introduced during the DNA replication and transcription, by transiently cleaving and rejoining one strand of the DNA duplex. Introduces a single-strand break via transesterification at a target site in duplex DNA. The scissile phosphodiester is attacked by the catalytic tyrosine of the enzyme, resulting in the formation of a DNA-(5'-phosphotyrosyl)-enzyme intermediate and the expulsion of a 3'-OH DNA strand. The free DNA strand then undergoes passage around the unbroken strand, thus removing DNA supercoils. Finally, in the religation step, the DNA 3'-OH attacks the covalent intermediate to expel the active-site tyrosine and restore the DNA phosphodiester backbone. This Rickettsia conorii (strain ATCC VR-613 / Malish 7) protein is DNA topoisomerase 1.